The primary structure comprises 143 residues: Large ribosomal subunit protein uL15 (143 aa).

The interval 1-57 (MQLNNLKPAAGSKHAKRRVGRGIGSGLGKTAGRGHKGQKSRSGGFHKVGFEGGQMPL) is disordered. Gly residues predominate over residues 21-31 (RGIGSGLGKTA).

This sequence belongs to the universal ribosomal protein uL15 family. As to quaternary structure, part of the 50S ribosomal subunit.

Its function is as follows. Binds to the 23S rRNA. This Ralstonia nicotianae (strain ATCC BAA-1114 / GMI1000) (Ralstonia solanacearum) protein is Large ribosomal subunit protein uL15.